Reading from the N-terminus, the 339-residue chain is Fructose-1,6-bisphosphatase class 1 (339 aa).

Residues E91, D113, L115, and D116 each contribute to the Mg(2+) site. Residues 116–119, N210, and K276 contribute to the substrate site; that span reads DGSS. Position 282 (E282) interacts with Mg(2+).

The protein belongs to the FBPase class 1 family. In terms of assembly, homotetramer. Requires Mg(2+) as cofactor.

The protein localises to the cytoplasm. The catalysed reaction is beta-D-fructose 1,6-bisphosphate + H2O = beta-D-fructose 6-phosphate + phosphate. The protein operates within carbohydrate biosynthesis; gluconeogenesis. The chain is Fructose-1,6-bisphosphatase class 1 from Bordetella bronchiseptica (strain ATCC BAA-588 / NCTC 13252 / RB50) (Alcaligenes bronchisepticus).